The primary structure comprises 283 residues: Formamidopyrimidine-DNA glycosylase (283 aa).

P2 serves as the catalytic Schiff-base intermediate with DNA. E3 functions as the Proton donor in the catalytic mechanism. The active-site Proton donor; for beta-elimination activity is the K58. Residues H100, R119, and K162 each contribute to the DNA site. The FPG-type zinc-finger motif lies at 247–283 (RVYGREGQRCQTPDCAEKILRKVQSGRSSFYCPACQR). The Proton donor; for delta-elimination activity role is filled by R273.

The protein belongs to the FPG family. Monomer. Zn(2+) serves as cofactor.

The enzyme catalyses Hydrolysis of DNA containing ring-opened 7-methylguanine residues, releasing 2,6-diamino-4-hydroxy-5-(N-methyl)formamidopyrimidine.. It carries out the reaction 2'-deoxyribonucleotide-(2'-deoxyribose 5'-phosphate)-2'-deoxyribonucleotide-DNA = a 3'-end 2'-deoxyribonucleotide-(2,3-dehydro-2,3-deoxyribose 5'-phosphate)-DNA + a 5'-end 5'-phospho-2'-deoxyribonucleoside-DNA + H(+). Its function is as follows. Involved in base excision repair of DNA damaged by oxidation or by mutagenic agents. Acts as a DNA glycosylase that recognizes and removes damaged bases. Has a preference for oxidized purines, such as 7,8-dihydro-8-oxoguanine (8-oxoG). Has AP (apurinic/apyrimidinic) lyase activity and introduces nicks in the DNA strand. Cleaves the DNA backbone by beta-delta elimination to generate a single-strand break at the site of the removed base with both 3'- and 5'-phosphates. In Jannaschia sp. (strain CCS1), this protein is Formamidopyrimidine-DNA glycosylase.